The sequence spans 331 residues: Hydroxyacylglutathione hydrolase 1, mitochondrial (331 aa).

The N-terminal 76 residues, M1 to S76, are a transit peptide targeting the mitochondrion. Zn(2+)-binding residues include H131 and H133. Fe cation-binding residues include D135 and H136. The Zn(2+) site is built by H189 and D208. Position 208 (D208) interacts with Fe cation. R246–N248 serves as a coordination point for substrate.

Belongs to the metallo-beta-lactamase superfamily. Glyoxalase II family. The cofactor is Fe(2+). It depends on Fe(3+) as a cofactor. Zn(2+) serves as cofactor. In terms of tissue distribution, mainly expressed in roots, flowers and flower buds. Also detected in leaves.

The protein resides in the mitochondrion. It catalyses the reaction an S-(2-hydroxyacyl)glutathione + H2O = a 2-hydroxy carboxylate + glutathione + H(+). It participates in secondary metabolite metabolism; methylglyoxal degradation; (R)-lactate from methylglyoxal: step 2/2. Thiolesterase that catalyzes the hydrolysis of S-D-lactoyl-glutathione to form glutathione and D-lactic acid. This Arabidopsis thaliana (Mouse-ear cress) protein is Hydroxyacylglutathione hydrolase 1, mitochondrial (GLX2-1).